The sequence spans 306 residues: Agmatinase (306 aa).

H126, D149, H151, D153, D230, and D232 together coordinate Mn(2+).

This sequence belongs to the arginase family. Agmatinase subfamily. Mn(2+) serves as cofactor.

The catalysed reaction is agmatine + H2O = urea + putrescine. It functions in the pathway amine and polyamine biosynthesis; putrescine biosynthesis via agmatine pathway; putrescine from agmatine: step 1/1. Catalyzes the formation of putrescine from agmatine. In Shigella boydii serotype 18 (strain CDC 3083-94 / BS512), this protein is Agmatinase.